The following is a 195-amino-acid chain: COMM domain-containing protein 3 (195 aa).

In terms of domain architecture, COMM spans 124–193 (HITDVSWRLE…DASKSLERAT (70 aa)).

This sequence belongs to the COMM domain-containing protein 3 family. Component of the commander complex consisting of the CCC subcomplex and the retriever subcomplex. Component of the CCC (COMMD/CCDC22/CCDC93) subcomplex consisting of COMMD1, COMMD2, COMMD3, COMMD4, COMMD5, COMMD6, COMMD7, COMMD8, COMMD9, COMMD10, CCDC22 and CCDC93; within the complex forms a heterodimer with COMMD2. Interacts with NFKB1/p105. Interacts with CCDC22, CCDC93, SCNN1B, CUL3, CUL4A, CUL4B, CUL5. In terms of tissue distribution, widely expressed with highest expression in thymus.

Its subcellular location is the cytoplasm. It localises to the nucleus. Its function is as follows. Scaffold protein in the commander complex that is essential for endosomal recycling of transmembrane cargos; the commander complex is composed of the CCC subcomplex and the retriever subcomplex. May modulate activity of cullin-RING E3 ubiquitin ligase (CRL) complexes. May down-regulate activation of NF-kappa-B. Modulates Na(+) transport in epithelial cells by regulation of apical cell surface expression of amiloride-sensitive sodium channel (ENaC) subunits. The chain is COMM domain-containing protein 3 (COMMD3) from Homo sapiens (Human).